Here is a 1338-residue protein sequence, read N- to C-terminus: Protein dispatched homolog 3 (1338 aa).

Residues 1–67 are Cytoplasmic-facing; that stretch reads MDTEDDPLLQ…VGWIFTNPYC (67 aa). A helical membrane pass occupies residues 68–88; sequence AGFILFLGCAIPAVLAVVMFL. At 89–406 the chain is on the lumenal side; that stretch reads HYPALDIDIS…YEVRRTFNND (318 aa). Residues 164 to 196 form a disordered region; sequence TRAKRSAPQGRTSSPEPRAHPHPGNETSRVTRG. In terms of domain architecture, SSD spans 401–559; that stretch reads RTFNNDMLLA…LFTMPAALGI (159 aa). Residues 407 to 427 traverse the membrane as a helical segment; the sequence is MLLAFISSSCIAVLVYILTSC. A topological domain (cytoplasmic) is located at residue Ser428. A helical membrane pass occupies residues 429 to 449; sequence VFLSFFGIASIGLSCLVALFL. The Lumenal segment spans residues 450-452; it reads YHV. Residues 453 to 473 traverse the membrane as a helical segment; that stretch reads VFGIQYLGILNGVAAFVIVGI. The Cytoplasmic segment spans residues 474-517; that stretch reads GVDDVFVFINTYRQATHLKDLRLRMIHTIQTAGKATFFTSLTTA. A helical transmembrane segment spans residues 518–538; the sequence is AAYAANIFSQIPAVHDFGLFM. Ser539 is a topological domain (lumenal). Residues 540–560 traverse the membrane as a helical segment; sequence LIVSCCWVAVLFTMPAALGIW. Over 561–672 the chain is Cytoplasmic; sequence TLYVSPLESS…WVLWSAVKSR (112 aa). Residues 673 to 693 form a helical membrane-spanning segment; sequence WVIVGLFLLVLLLSIFFASRL. Topologically, residues 694-1128 are lumenal; that stretch reads RPASRAPVLF…IFMEIIGVQS (435 aa). Residues 747 to 768 form a disordered region; sequence SLEKKKRGSASPWGSKGSISDT. The chain crosses the membrane as a helical span at residues 1129-1149; the sequence is ALYGLILSLVICVAAVAVFTT. His1150 is a topological domain (cytoplasmic). The helical transmembrane segment at 1151–1171 threads the bilayer; it reads ILLLLPVLLSILGVVCLVVTI. Residues 1172 to 1237 lie on the Lumenal side of the membrane; that stretch reads MYWSGWEMGA…TIEAIRHVGV (66 aa). A helical membrane pass occupies residues 1238-1258; that stretch reads AIVSSAVTTVIATVPLFFCII. Topologically, residues 1259 to 1266 are cytoplasmic; the sequence is APFAKFGK. Residues 1267-1287 traverse the membrane as a helical segment; that stretch reads IVALNTGVSILYTLTVSTALL. Over 1288 to 1302 the chain is Lumenal; the sequence is SIMGPGTFTRSRTSC. The chain crosses the membrane as a helical span at residues 1303-1323; the sequence is LKAVAGVLLAGLLGLCICLAL. Residues 1324–1338 lie on the Cytoplasmic side of the membrane; the sequence is LKGGFKIPLPNGTAL.

This sequence belongs to the patched family. In terms of tissue distribution, expressed in retina, hippocampus and cerebellum. Expressed in the ganglion and bipolar cells of the inner and outer nuclear layers of the retina and in Purkinje cells (at protein level). Expressed strongly in brain and retina, weakly in testis and bone marrow.

The protein resides in the endoplasmic reticulum membrane. It localises to the nucleus membrane. Its subcellular location is the cytoplasmic vesicle membrane. Functionally, plays a role in neuronal proliferation and differentiation. Plays a role in the accumulation of cellular cholesterol. Involved in intracellular lipid droplet formation. May contribute to cholesterol homeostasis in neuronal cells. This is Protein dispatched homolog 3 from Gallus gallus (Chicken).